The sequence spans 383 residues: tRNA-specific 2-thiouridylase MnmA (383 aa).

Residues 31–38 (GLSGGVDS) and Leu-57 each bind ATP. Cys-118 acts as the Nucleophile in catalysis. Cys-118 and Cys-217 are oxidised to a cystine. Gly-143 is an ATP binding site. The segment at 167 to 169 (KDQ) is interaction with tRNA. Residue Cys-217 is the Cysteine persulfide intermediate of the active site. Residues 322–323 (RY) are interaction with tRNA.

It belongs to the MnmA/TRMU family.

The protein localises to the cytoplasm. The enzyme catalyses S-sulfanyl-L-cysteinyl-[protein] + uridine(34) in tRNA + AH2 + ATP = 2-thiouridine(34) in tRNA + L-cysteinyl-[protein] + A + AMP + diphosphate + H(+). In terms of biological role, catalyzes the 2-thiolation of uridine at the wobble position (U34) of tRNA, leading to the formation of s(2)U34. This chain is tRNA-specific 2-thiouridylase MnmA, found in Synechococcus sp. (strain RCC307).